Here is a 261-residue protein sequence, read N- to C-terminus: Potassium/proton antiporter CemA (261 aa).

The next 3 membrane-spanning stretches (helical) occupy residues 138-158 (IISH…CLIL), 186-206 (ILLV…ELMI), and 221-241 (IISG…KYWI).

Belongs to the CemA family.

It is found in the plastid. Its subcellular location is the chloroplast inner membrane. The catalysed reaction is K(+)(in) + H(+)(out) = K(+)(out) + H(+)(in). Its function is as follows. Contributes to K(+)/H(+) antiport activity by supporting proton efflux to control proton extrusion and homeostasis in chloroplasts in a light-dependent manner to modulate photosynthesis. Prevents excessive induction of non-photochemical quenching (NPQ) under continuous-light conditions. Indirectly promotes efficient inorganic carbon uptake into chloroplasts. This chain is Potassium/proton antiporter CemA, found in Cryptomeria japonica (Japanese cedar).